A 563-amino-acid polypeptide reads, in one-letter code: Forkhead box protein O (563 aa).

Disordered stretches follow at residues 1 to 72 (MDDF…DPQQ) and 177 to 243 (KSVR…SYQL). T43 is subject to Phosphothreonine; by PKB/AKT1. The span at 58-72 (TKASNQQLANGDPQQ) shows a compositional bias: polar residues. Positions 90–196 (WGNLSYADLI…ETSRYEKRRG (107 aa)) form a DNA-binding region, fork-head. At S185 the chain carries Phosphoserine; by PKB/AKT1. The span at 216-225 (ATPSPSSSVS) shows a compositional bias: polar residues. S253 carries the post-translational modification Phosphoserine; by PKB/AKT1. Residues S256, S257, and S262 each carry the phosphoserine modification. The interval 317 to 371 (AASGLPTQPPPPYQPPQHPQHTQGYALNGPGLSPNSVTTTMSPAYPNSEPSSDSL) is disordered. Over residues 323-334 (TQPPPPYQPPQH) the composition is skewed to pro residues. Residues 349 to 358 (SPNSVTTTMS) show a composition bias toward polar residues.

Interacts with melt.

The protein resides in the cytoplasm. The protein localises to the nucleus. Functionally, transcription factor involved in the regulation of the insulin signaling pathway. Consistently activates both the downstream target Thor\d4EBP and the feedback control target InR. Involved in negative regulation of the cell cycle, modulating cell growth and proliferation. In response to cellular stresses, such as nutrient deprivation or increased levels of reactive oxygen species, foxo is activated and inhibits growth through the action of target genes such as Thor. Foxo activated in the adult fat body can regulate lifespan in adults; an insulin peptide itself may function as one secondary messenger of insulin-regulated aging. Also regulates Lip4, homolog of human acid lipases, thereby acting as a key modulator of lipid metabolism by insulin signaling and integrates insulin responses to glucose and lipid homeostasis. The sequence is that of Forkhead box protein O from Drosophila mojavensis (Fruit fly).